A 130-amino-acid polypeptide reads, in one-letter code: Sigma-w pathway protein YsdB (130 aa).

Residues 2-22 form a helical membrane-spanning segment; that stretch reads FVMVLRIILLALFAYCIYAVV.

Its subcellular location is the membrane. May mediate a negative feedback loop that down-regulates the expression of the sigma-W regulon following the activation of sigma-W in response to conditions of cell envelope stress. Might interact with and inhibit the activity of the protease PrsW, or could bind to the anti-sigma-W factor RsiW and thereby protect it from PrsW-mediated cleavage. The sequence is that of Sigma-w pathway protein YsdB (ysdB) from Bacillus subtilis (strain 168).